Here is a 125-residue protein sequence, read N- to C-terminus: Small ribosomal subunit protein uS12 (125 aa).

The segment at Met-1–Arg-31 is disordered. Position 89 is a 3-methylthioaspartic acid (Asp-89). The disordered stretch occupies residues Gln-105–Ala-125. Residues Ser-113–Ala-125 show a composition bias toward basic residues.

This sequence belongs to the universal ribosomal protein uS12 family. As to quaternary structure, part of the 30S ribosomal subunit. Contacts proteins S8 and S17. May interact with IF1 in the 30S initiation complex.

With S4 and S5 plays an important role in translational accuracy. Its function is as follows. Interacts with and stabilizes bases of the 16S rRNA that are involved in tRNA selection in the A site and with the mRNA backbone. Located at the interface of the 30S and 50S subunits, it traverses the body of the 30S subunit contacting proteins on the other side and probably holding the rRNA structure together. The combined cluster of proteins S8, S12 and S17 appears to hold together the shoulder and platform of the 30S subunit. This Methylibium petroleiphilum (strain ATCC BAA-1232 / LMG 22953 / PM1) protein is Small ribosomal subunit protein uS12.